Consider the following 93-residue polypeptide: Small ribosomal subunit protein uS19 (93 aa).

Disordered regions lie at residues 1–24 (MPRSLKKGPFVDDHLQKKVDAQNE) and 73–93 (EFAPTRTFKGHEKDDRKGRRR). Composition is skewed to basic and acidic residues over residues 9 to 21 (PFVDDHLQKKVDA) and 81 to 93 (KGHEKDDRKGRRR).

Belongs to the universal ribosomal protein uS19 family.

Functionally, protein S19 forms a complex with S13 that binds strongly to the 16S ribosomal RNA. The polypeptide is Small ribosomal subunit protein uS19 (Kineococcus radiotolerans (strain ATCC BAA-149 / DSM 14245 / SRS30216)).